Consider the following 665-residue polypeptide: ELMO family protein LMO1 (665 aa).

Forms an active heterodimer with DCK1.

It localises to the cytoplasm. The protein localises to the mitochondrion. Functionally, forms a transiant heterodimeric complex with DCK1, that acts as a guanine nucleotide exchange factor (GEF) for the small GTPase RHO5. DCK1, LMO1 and RHO5 relocate to mitochondria upon oxidative stress and trigger cell death. The DCK1/LMO1/RHO5 signaling module mediates mitochondrial turnover under nitrogen starvation conditions via mitophagy. The DCK1/LMO1/RHO5 signaling module also plays a role in cell wall integrity signaling. The polypeptide is ELMO family protein LMO1 (Saccharomyces cerevisiae (strain ATCC 204508 / S288c) (Baker's yeast)).